Reading from the N-terminus, the 123-residue chain is uncharacterized protein (123 aa).

The signal sequence occupies residues 1 to 19 (MKIKYFFIPLFSSAILFSA). A lipid anchor (N-palmitoyl cysteine) is attached at C20. C20 is lipidated: S-diacylglycerol cysteine.

It belongs to the MG439/MG440 family.

Its subcellular location is the cell membrane. This is an uncharacterized protein from Mycoplasma pneumoniae (strain ATCC 29342 / M129 / Subtype 1) (Mycoplasmoides pneumoniae).